The sequence spans 168 residues: MSLLFMISVGFSLSSLSMMVIQPLSLGLMLMLMVLCVSGLTSLIIFSWYGYLLFLVYVGGMLVMFMYVISLIPNLIFLSNKVFAYFFFIFFGFMMMNFFVMKELVSVEVKSMSLFDYGYMSMGGSGIIMLYDNFFCYVLLAVILLFVLISVVKICYYCEGPLRVFKFK.

The next 5 helical transmembrane spans lie at 26–46 (LGLM…LIIF), 52–72 (LLFL…ISLI), 82–102 (VFAY…FVMK), 111–131 (SMSL…IMLY), and 134–154 (FFCY…VVKI).

This sequence belongs to the complex I subunit 6 family.

The protein localises to the mitochondrion membrane. It catalyses the reaction a ubiquinone + NADH + 5 H(+)(in) = a ubiquinol + NAD(+) + 4 H(+)(out). Its function is as follows. Core subunit of the mitochondrial membrane respiratory chain NADH dehydrogenase (Complex I) that is believed to belong to the minimal assembly required for catalysis. Complex I functions in the transfer of electrons from NADH to the respiratory chain. The immediate electron acceptor for the enzyme is believed to be ubiquinone. This is NADH-ubiquinone oxidoreductase chain 6 (ND6) from Heterololigo bleekeri (Spear squid).